A 224-amino-acid chain; its full sequence is Prothoracicotropic hormone (224 aa).

The N-terminal stretch at 1–29 (MITRPIILVILCYAILMIVQSFVPKAVAL) is a signal peptide. Cystine bridges form between cysteine 132/cysteine 169, cysteine 155/cysteine 211, and cysteine 163/cysteine 213. N-linked (GlcNAc...) asparagine glycosylation is present at asparagine 156.

Homodimer; disulfide-linked. In terms of tissue distribution, PTTH is synthesized by two dorsolateral neurosecretory cells of the Bombyx brain.

Functionally, PTTH is a brain secretory polypeptide of insects which stimulates the prothoracic glands to produce and release ecdysone, the steroid essential to insect development. Its function is as follows. Peptides P2K and P6K are presumed to be cleaved post-translationally and may play some unknown physiologically or developmentally important functions. The chain is Prothoracicotropic hormone from Bombyx mori (Silk moth).